We begin with the raw amino-acid sequence, 329 residues long: Protein SPATA31F3 (329 aa).

The helical transmembrane segment at 11–31 (VGYSVYTYGSIFIIALIIWQV) threads the bilayer. Residues 58 to 85 (SDRATRAKRTSKEEAEKLQKLLDTMKSQ) are a coiled coil. Disordered stretches follow at residues 149-184 (ADRS…RSAT), 201-250 (QQLD…AAPT), and 288-329 (KPMT…KRNI). Ser152 and Ser153 each carry phosphoserine. Composition is skewed to polar residues over residues 154–184 (ELTY…RSAT) and 201–223 (QQLD…SSTD). Over residues 232–242 (QKKRKKTKKLA) the composition is skewed to basic residues. Positions 293–320 (EPEKTHSPVRDQAEGAEKKKKPECDLKA) are enriched in basic and acidic residues.

The protein belongs to the SPATA31 family.

The protein resides in the membrane. The polypeptide is Protein SPATA31F3 (Rattus norvegicus (Rat)).